Here is a 156-residue protein sequence, read N- to C-terminus: Small ribosomal subunit protein uS7 (156 aa).

It belongs to the universal ribosomal protein uS7 family. As to quaternary structure, part of the 30S ribosomal subunit. Contacts proteins S9 and S11.

One of the primary rRNA binding proteins, it binds directly to 16S rRNA where it nucleates assembly of the head domain of the 30S subunit. Is located at the subunit interface close to the decoding center, probably blocks exit of the E-site tRNA. In Nocardioides sp. (strain ATCC BAA-499 / JS614), this protein is Small ribosomal subunit protein uS7.